Consider the following 511-residue polypeptide: GMP synthase [glutamine-hydrolyzing] (511 aa).

The Glutamine amidotransferase type-1 domain occupies 5-195 (LILVLDFGGQ…LYKICGCSGD (191 aa)). Cysteine 82 functions as the Nucleophile in the catalytic mechanism. Residues histidine 169 and glutamate 171 contribute to the active site. Positions 196 to 386 (WKMASFIEHS…LGIPEDIVMR (191 aa)) constitute a GMPS ATP-PPase domain. Position 223-229 (223-229 (SGGVDSS)) interacts with ATP.

As to quaternary structure, homodimer.

It catalyses the reaction XMP + L-glutamine + ATP + H2O = GMP + L-glutamate + AMP + diphosphate + 2 H(+). Its pathway is purine metabolism; GMP biosynthesis; GMP from XMP (L-Gln route): step 1/1. Catalyzes the synthesis of GMP from XMP. In Acetivibrio thermocellus (strain ATCC 27405 / DSM 1237 / JCM 9322 / NBRC 103400 / NCIMB 10682 / NRRL B-4536 / VPI 7372) (Clostridium thermocellum), this protein is GMP synthase [glutamine-hydrolyzing].